The chain runs to 177 residues: Antigen TyF1 (177 aa).

Belongs to the Dps family. As to quaternary structure, homodecamer.

The sequence is that of Antigen TyF1 from Treponema pallidum subsp. pertenue (Yaws treponeme).